Reading from the N-terminus, the 180-residue chain is Endoribonuclease YbeY (180 aa).

Positions 149, 153, and 159 each coordinate Zn(2+).

It belongs to the endoribonuclease YbeY family. The cofactor is Zn(2+).

It localises to the cytoplasm. Its function is as follows. Single strand-specific metallo-endoribonuclease involved in late-stage 70S ribosome quality control and in maturation of the 3' terminus of the 16S rRNA. The protein is Endoribonuclease YbeY of Prochlorococcus marinus subsp. pastoris (strain CCMP1986 / NIES-2087 / MED4).